The primary structure comprises 205 residues: Octanoyltransferase (205 aa).

One can recognise a BPL/LPL catalytic domain in the interval 30-205 (ERTADEIWLL…QALRARLGYA (176 aa)). Substrate is bound by residues 69–76 (RGGQVTYH), 136–138 (SLG), and 149–151 (GLA). Residue Cys167 is the Acyl-thioester intermediate of the active site.

Belongs to the LipB family.

It localises to the cytoplasm. The enzyme catalyses octanoyl-[ACP] + L-lysyl-[protein] = N(6)-octanoyl-L-lysyl-[protein] + holo-[ACP] + H(+). It participates in protein modification; protein lipoylation via endogenous pathway; protein N(6)-(lipoyl)lysine from octanoyl-[acyl-carrier-protein]: step 1/2. In terms of biological role, catalyzes the transfer of endogenously produced octanoic acid from octanoyl-acyl-carrier-protein onto the lipoyl domains of lipoate-dependent enzymes. Lipoyl-ACP can also act as a substrate although octanoyl-ACP is likely to be the physiological substrate. This is Octanoyltransferase from Ectopseudomonas mendocina (strain ymp) (Pseudomonas mendocina).